The primary structure comprises 107 residues: Anti-adapter protein IraM (107 aa).

This sequence belongs to the IraM/RssC family.

The protein localises to the cytoplasm. Functionally, inhibits RpoS proteolysis by regulating RssB activity, thereby increasing the stability of the sigma stress factor RpoS during magnesium starvation. The chain is Anti-adapter protein IraM from Escherichia coli O7:K1 (strain IAI39 / ExPEC).